Reading from the N-terminus, the 375-residue chain is Outer membrane porin C (375 aa).

Positions 1–21 (MKVKVLSLLVPALLVAGAANA) are cleaved as a signal peptide. Residues 22–33 (AEVYNKDGNKLD) are Periplasmic-facing. The beta stranded transmembrane segment at 34 to 42 (LYGKVDGLH) threads the bilayer. Over 43-53 (YFSDDKSVDGD) the chain is Extracellular. A beta stranded transmembrane segment spans residues 54–63 (QTYMRLGFKG). Residues 64–73 (ETQVTDQLTG) lie on the Periplasmic side of the membrane. The chain crosses the membrane as a beta stranded span at residues 74-84 (YGQWEYQIQGN). Topologically, residues 85–91 (APESENN) are extracellular. Residues 92 to 101 (SWTRVAFAGL) traverse the membrane as a beta stranded segment. The Periplasmic portion of the chain corresponds to 102 to 106 (KFQDI). Residues 107-115 (GSFDYGRNY) traverse the membrane as a beta stranded segment. Topologically, residues 116–141 (GVVYDVTSWTDVLPEFGGDTYGSDNF) are extracellular. A beta stranded transmembrane segment spans residues 142–154 (MQQRGNGFATYRN). Residues 155-163 (TDFFGLVDG) lie on the Periplasmic side of the membrane. A beta stranded transmembrane segment spans residues 164–171 (LNFAVQYQ). Residues 172–204 (GQNGSVSGENDPDFTGHGITNNGRKALRQNGDG) are Extracellular-facing. A beta stranded membrane pass occupies residues 205–211 (VGGSITY). Residues 212–215 (DYEG) lie on the Periplasmic side of the membrane. Residues 216–223 (FGVGAAVS) form a beta stranded membrane-spanning segment. At 224-245 (SSKRTDAQNTAAYIGNGDRAET) the chain is on the extracellular side. Residues 246–252 (YTGGLKY) form a beta stranded membrane-spanning segment. Residues 253 to 256 (DANN) lie on the Periplasmic side of the membrane. Residues 257–264 (IYLAAQYT) form a beta stranded membrane-spanning segment. The Extracellular segment spans residues 265 to 273 (QTYNATRVG). Residues 274-290 (SLGWANKAQNFEAVAQY) traverse the membrane as a beta stranded segment. Residues 291–295 (QFDFG) are Periplasmic-facing. A beta stranded membrane pass occupies residues 296 to 303 (LRPSVAYL). The Extracellular portion of the chain corresponds to 304-326 (QSKGKNLGTIGTRNYDDEDILKY). The beta stranded transmembrane segment at 327 to 334 (VDVGATYY) threads the bilayer. Over 335 to 338 (FNKN) the chain is Periplasmic. A beta stranded membrane pass occupies residues 339–346 (MSTYVDYK). At 347–366 (INLLDDNQFTRDAGINTDNI) the chain is on the extracellular side. The beta stranded transmembrane segment at 367–374 (VALGLVYQ) threads the bilayer. Residue F375 is a topological domain, periplasmic.

The protein belongs to the Gram-negative porin family. Homotrimer. Forms mixed heterotrimers with OmpF; other mixed heterotrimers are also probable.

The protein localises to the cell outer membrane. Forms pores that allow passive diffusion of small molecules across the outer membrane. Functionally, (Microbial infection) Supports colicin E5 entry in the absence of its major receptor OmpF. In terms of biological role, (Microbial infection) A mixed OmpC-OmpF heterotrimer is the outer membrane receptor for toxin CdiA-EC536. The chain is Outer membrane porin C (ompC) from Escherichia coli O6:K15:H31 (strain 536 / UPEC).